Consider the following 411-residue polypeptide: Protrudin (411 aa).

The disordered stretch occupies residues 1–27; the sequence is MQTSEREGSGPELSPSVMPEAPLESPP. The Cytoplasmic portion of the chain corresponds to 1–66; it reads MQTSEREGSG…AGDGVRYLLR (66 aa). The sufficient for homooligomerization stretch occupies residues 1-92; the sequence is MQTSEREGSG…LFLTLNEGAW (92 aa). Residues 1-205 are sufficient for localization to endoplasmic reticulum tubular network and for interactions with REEP1, REEP5, ATL1, ATL2, ATL3 and SPAST; that stretch reads MQTSEREGSG…LYLLPLCWVL (205 aa). The necessary for interaction with RAB11A and function in neurite outgrowth stretch occupies residues 51–64; it reads LEPLKDAGDGVRYL. Residues 67-87 form a helical membrane-spanning segment; sequence WQMPLCSLLTCLGLNVLFLTL. N88 is a topological domain (lumenal). The helical transmembrane segment at 89–109 threads the bilayer; it reads EGAWYSVGALMISVPALLGYL. The Cytoplasmic segment spans residues 110–187; sequence QEVCRARLPD…NPVVSSQFYG (78 aa). The helical intramembrane region spans 188–208; the sequence is ALLGTVCMLYLLPLCWVLTLL. Residues 209-411 lie on the Cytoplasmic side of the membrane; the sequence is NSTLFLGNVE…CASCNQTLSK (203 aa). The segment at 234-286 is disordered; the sequence is MNPKQEEHAFESPPPPDVGGKDGLMDSTPALTPTEDLTPGSVEEAEEAEPDEE. The interval 271 to 361 is necessary for interaction with KIF5A; that stretch reads TPGSVEEAEE…GCSATFSVLK (91 aa). Residues 276-286 show a composition bias toward acidic residues; the sequence is EEAEEAEPDEE. The tract at residues 286–292 is necessary for interaction with VAPA and function in cell projections formation; that stretch reads EFKDAIE. An FYVE-type zinc finger spans residues 344-410; the sequence is TNNFGNCTGC…VCASCNQTLS (67 aa). C350, C353, C366, C369, C374, C377, C402, and C405 together coordinate Zn(2+).

In terms of assembly, can form homooligomers (monomers, dimers and tetramers). Interacts with RAB11A (GDP-bound form); regulates RAB11A. Interacts with FKBP8; may negatively regulate ZFYVE27 phosphorylation. Interacts with VAPA (via MSP domain); may regulate ZFYVE27 retention in the endoplasmic reticulum and its function in cell projections formation. Interacts with VAPB (via MSP domain). Interacts with REEP1, REEP5 and ATL1. Interacts with ATL2, ATL3 and SPAST. Interacts with KIF5A and RTN3. Interacts with RAB11B (GDP-bound form), SURF4, KIF5B and KIF5C. Post-translationally, phosphorylated. Phosphorylation is induced by NGF through the MAPK/ERK pathway and modulates interaction with RAB11A.

It is found in the recycling endosome membrane. The protein localises to the endoplasmic reticulum membrane. The protein resides in the cell projection. It localises to the growth cone membrane. Its function is as follows. Key regulator of RAB11-dependent vesicular trafficking during neurite extension through polarized membrane transport. Promotes axonal elongation and contributes to the establishment of neuronal cell polarity. Involved in nerve growth factor-induced neurite formation in VAPA-dependent manner. Contributes to both the formation and stabilization of the tubular ER network. Involved in ER morphogenesis by regulating the sheet-to-tubule balance and possibly the density of tubule interconnections. Acts as an adapter protein and facilitates the interaction of KIF5A with VAPA, VAPB, SURF4, RAB11A, RAB11B and RTN3 and the ZFYVE27-KIF5A complex contributes to the transport of these proteins in neurons. Can induce formation of neurite-like membrane protrusions in non-neuronal cells in a KIF5A/B-dependent manner. This Homo sapiens (Human) protein is Protrudin (ZFYVE27).